We begin with the raw amino-acid sequence, 489 residues long: UDP-N-acetylmuramoyl-L-alanyl-D-glutamate--2,6-diaminopimelate ligase (489 aa).

S30 contacts UDP-N-acetyl-alpha-D-muramoyl-L-alanyl-D-glutamate. 110-116 is an ATP binding site; sequence GTNGKTT. UDP-N-acetyl-alpha-D-muramoyl-L-alanyl-D-glutamate contacts are provided by residues 152 to 153, S179, and R187; that span reads TT. K219 carries the N6-carboxylysine modification. Meso-2,6-diaminopimelate contacts are provided by residues R381, 405-408, G458, and E462; that span reads DNPR. Residues 405–408 carry the Meso-diaminopimelate recognition motif motif; it reads DNPR.

It belongs to the MurCDEF family. MurE subfamily. The cofactor is Mg(2+). Post-translationally, carboxylation is probably crucial for Mg(2+) binding and, consequently, for the gamma-phosphate positioning of ATP.

It is found in the cytoplasm. The catalysed reaction is UDP-N-acetyl-alpha-D-muramoyl-L-alanyl-D-glutamate + meso-2,6-diaminopimelate + ATP = UDP-N-acetyl-alpha-D-muramoyl-L-alanyl-gamma-D-glutamyl-meso-2,6-diaminopimelate + ADP + phosphate + H(+). Its pathway is cell wall biogenesis; peptidoglycan biosynthesis. Its function is as follows. Catalyzes the addition of meso-diaminopimelic acid to the nucleotide precursor UDP-N-acetylmuramoyl-L-alanyl-D-glutamate (UMAG) in the biosynthesis of bacterial cell-wall peptidoglycan. The polypeptide is UDP-N-acetylmuramoyl-L-alanyl-D-glutamate--2,6-diaminopimelate ligase (Syntrophomonas wolfei subsp. wolfei (strain DSM 2245B / Goettingen)).